The primary structure comprises 192 residues: MKELFLIIGAPGSGKTTDASLIAQADATNITHYSTGDLLRAEVASGSELGKTIDSFISKGNLVPLDVVINTIVYALKAAPTKTIIIDGYPRSVEQMMEFDKVLSEQNEICLKGVIEVRVSEEVAKERVLGRNRGADDNEEVFYNRMKVYTEPLNEILDFYQKKKLHFIIDGERTIEPIVADMKELIKKIQSI.

12 to 17 (GSGKTT) is a binding site for ATP. Residues 34-63 (STGDLLRAEVASGSELGKTIDSFISKGNLV) form an NMP region. Residues threonine 35, arginine 40, 61–63 (NLV), 88–91 (GYPR), and glutamine 95 contribute to the AMP site. The tract at residues 130 to 136 (GRNRGAD) is LID. Arginine 131 is an ATP binding site. The AMP site is built by arginine 133 and arginine 145. Arginine 173 lines the ATP pocket.

Belongs to the adenylate kinase family. Monomer.

It is found in the cytoplasm. It carries out the reaction AMP + ATP = 2 ADP. It functions in the pathway purine metabolism; AMP biosynthesis via salvage pathway; AMP from ADP: step 1/1. In terms of biological role, catalyzes the reversible transfer of the terminal phosphate group between ATP and AMP. Plays an important role in cellular energy homeostasis and in adenine nucleotide metabolism. The polypeptide is Adenylate kinase (Campylobacter jejuni subsp. jejuni serotype O:2 (strain ATCC 700819 / NCTC 11168)).